The sequence spans 104 residues: Putative membrane protein insertion efficiency factor (104 aa).

The tract at residues 83–104 is disordered; that stretch reads SSPTPLAESPDDRTVPHTQETS.

The protein belongs to the UPF0161 family.

The protein resides in the cell inner membrane. Functionally, could be involved in insertion of integral membrane proteins into the membrane. The chain is Putative membrane protein insertion efficiency factor from Chlamydia trachomatis serovar D (strain ATCC VR-885 / DSM 19411 / UW-3/Cx).